A 373-amino-acid chain; its full sequence is Putative zinc finger protein 012R (373 aa).

The segment at 2–29 (FECTHCDLHFESKSKLATHQKTKKCTAH) adopts a C2H2-type zinc-finger fold.

Belongs to the IIV-6 302L family.

This chain is Putative zinc finger protein 012R, found in Invertebrate iridescent virus 3 (IIV-3).